A 160-amino-acid polypeptide reads, in one-letter code: MTKKKAHKPGSATIAQNKRARFEYAIEEEFEAGLSLQGWEVKSLRAGKANISDSYVTFRDGEAYLFGATVSPLNVASSHVVCDPTRTRKLLLKKRELDSLLGRVNRDGYTVVALSMYWKNAWAKIKIGVAKGKKEHDKRDDIKDREWQTAKSRIMKHANR.

The segment covering 138–148 (KRDDIKDREWQ) has biased composition (basic and acidic residues). Positions 138–160 (KRDDIKDREWQTAKSRIMKHANR) are disordered.

It belongs to the SmpB family.

It localises to the cytoplasm. Required for rescue of stalled ribosomes mediated by trans-translation. Binds to transfer-messenger RNA (tmRNA), required for stable association of tmRNA with ribosomes. tmRNA and SmpB together mimic tRNA shape, replacing the anticodon stem-loop with SmpB. tmRNA is encoded by the ssrA gene; the 2 termini fold to resemble tRNA(Ala) and it encodes a 'tag peptide', a short internal open reading frame. During trans-translation Ala-aminoacylated tmRNA acts like a tRNA, entering the A-site of stalled ribosomes, displacing the stalled mRNA. The ribosome then switches to translate the ORF on the tmRNA; the nascent peptide is terminated with the 'tag peptide' encoded by the tmRNA and targeted for degradation. The ribosome is freed to recommence translation, which seems to be the essential function of trans-translation. This is SsrA-binding protein from Serratia proteamaculans (strain 568).